The primary structure comprises 429 residues: L-cysteine:1D-myo-inositol 2-amino-2-deoxy-alpha-D-glucopyranoside ligase (429 aa).

C60 contributes to the Zn(2+) binding site. Residues 60 to 63 (CGIT), T75, and 98 to 100 (NIT) each bind L-cysteinyl-5'-AMP. The 'HIGH' region signature appears at 62–72 (ITPYDATHLGH). Residues 204 to 209 (ERGGDP) carry the 'ERGGDP' region motif. W244 lines the L-cysteinyl-5'-AMP pocket. C248 provides a ligand contact to Zn(2+). 266–268 (GSD) is a binding site for L-cysteinyl-5'-AMP. H273 serves as a coordination point for Zn(2+). Position 300 (I300) interacts with L-cysteinyl-5'-AMP. The 'KMSKS' region motif lies at 306–310 (KMSKS).

The protein belongs to the class-I aminoacyl-tRNA synthetase family. MshC subfamily. Monomer. Zn(2+) serves as cofactor.

It catalyses the reaction 1D-myo-inositol 2-amino-2-deoxy-alpha-D-glucopyranoside + L-cysteine + ATP = 1D-myo-inositol 2-(L-cysteinylamino)-2-deoxy-alpha-D-glucopyranoside + AMP + diphosphate + H(+). In terms of biological role, catalyzes the ATP-dependent condensation of GlcN-Ins and L-cysteine to form L-Cys-GlcN-Ins. The protein is L-cysteine:1D-myo-inositol 2-amino-2-deoxy-alpha-D-glucopyranoside ligase of Mycolicibacterium vanbaalenii (strain DSM 7251 / JCM 13017 / BCRC 16820 / KCTC 9966 / NRRL B-24157 / PYR-1) (Mycobacterium vanbaalenii).